Reading from the N-terminus, the 72-residue chain is Protein SlyX homolog (72 aa).

It belongs to the SlyX family.

This Vibrio cholerae serotype O1 (strain ATCC 39541 / Classical Ogawa 395 / O395) protein is Protein SlyX homolog.